The sequence spans 360 residues: Aminomethyltransferase (360 aa).

Belongs to the GcvT family. The glycine cleavage system is composed of four proteins: P, T, L and H.

It carries out the reaction N(6)-[(R)-S(8)-aminomethyldihydrolipoyl]-L-lysyl-[protein] + (6S)-5,6,7,8-tetrahydrofolate = N(6)-[(R)-dihydrolipoyl]-L-lysyl-[protein] + (6R)-5,10-methylene-5,6,7,8-tetrahydrofolate + NH4(+). The glycine cleavage system catalyzes the degradation of glycine. This Pseudomonas putida (strain ATCC 47054 / DSM 6125 / CFBP 8728 / NCIMB 11950 / KT2440) protein is Aminomethyltransferase.